Reading from the N-terminus, the 55-residue chain is Large ribosomal subunit protein bL32c (55 aa).

This sequence belongs to the bacterial ribosomal protein bL32 family.

Its subcellular location is the plastid. It localises to the chloroplast. The polypeptide is Large ribosomal subunit protein bL32c (Nicotiana sylvestris (Wood tobacco)).